Reading from the N-terminus, the 581-residue chain is Proline--tRNA ligase 1 (581 aa).

This sequence belongs to the class-II aminoacyl-tRNA synthetase family. ProS type 1 subfamily. Homodimer.

It is found in the cytoplasm. It carries out the reaction tRNA(Pro) + L-proline + ATP = L-prolyl-tRNA(Pro) + AMP + diphosphate. Functionally, catalyzes the attachment of proline to tRNA(Pro) in a two-step reaction: proline is first activated by ATP to form Pro-AMP and then transferred to the acceptor end of tRNA(Pro). As ProRS can inadvertently accommodate and process non-cognate amino acids such as alanine and cysteine, to avoid such errors it has two additional distinct editing activities against alanine. One activity is designated as 'pretransfer' editing and involves the tRNA(Pro)-independent hydrolysis of activated Ala-AMP. The other activity is designated 'posttransfer' editing and involves deacylation of mischarged Ala-tRNA(Pro). The misacylated Cys-tRNA(Pro) is not edited by ProRS. This Rhodococcus jostii (strain RHA1) protein is Proline--tRNA ligase 1.